A 122-amino-acid chain; its full sequence is Small ribosomal subunit protein uS13 (122 aa).

The tract at residues R99–K122 is disordered.

Belongs to the universal ribosomal protein uS13 family. Part of the 30S ribosomal subunit. Forms a loose heterodimer with protein S19. Forms two bridges to the 50S subunit in the 70S ribosome.

Located at the top of the head of the 30S subunit, it contacts several helices of the 16S rRNA. In the 70S ribosome it contacts the 23S rRNA (bridge B1a) and protein L5 of the 50S subunit (bridge B1b), connecting the 2 subunits; these bridges are implicated in subunit movement. Contacts the tRNAs in the A and P-sites. In Rhizobium etli (strain CIAT 652), this protein is Small ribosomal subunit protein uS13.